Consider the following 141-residue polypeptide: MLTEDDKQLIQHVWEKVLEHQEDFGAEALERMFIVYPSTKTYFPHFDLHHDSEQIRHHGKKVVGALGDAVKHIDNLSATLSELSNLHAYNLRVDPVNFKLLSHCFQVVLGAHLGREYTPQVQVAYDKFLAAVSAVLAEKYR.

The region spanning 1–141 (MLTEDDKQLI…VSAVLAEKYR (141 aa)) is the Globin domain. H58 is a binding site for O2. Heme b is bound at residue H87.

It belongs to the globin family. In terms of assembly, tetramer of two alpha chains and two beta chains. As to expression, red blood cells.

Functionally, involved in oxygen transport from the lung to the various peripheral tissues. This is Hemoglobin D subunit alpha from Aldabrachelys gigantea (Aldabra giant tortoise).